The sequence spans 309 residues: Aspartate carbamoyltransferase catalytic subunit (309 aa).

Carbamoyl phosphate contacts are provided by Arg-55 and Thr-56. Lys-85 is a binding site for L-aspartate. Arg-106, His-135, and Gln-138 together coordinate carbamoyl phosphate. L-aspartate contacts are provided by Arg-168 and Arg-230. Carbamoyl phosphate is bound by residues Leu-268 and Pro-269.

The protein belongs to the aspartate/ornithine carbamoyltransferase superfamily. ATCase family. As to quaternary structure, heterododecamer (2C3:3R2) of six catalytic PyrB chains organized as two trimers (C3), and six regulatory PyrI chains organized as three dimers (R2).

It catalyses the reaction carbamoyl phosphate + L-aspartate = N-carbamoyl-L-aspartate + phosphate + H(+). It functions in the pathway pyrimidine metabolism; UMP biosynthesis via de novo pathway; (S)-dihydroorotate from bicarbonate: step 2/3. Its function is as follows. Catalyzes the condensation of carbamoyl phosphate and aspartate to form carbamoyl aspartate and inorganic phosphate, the committed step in the de novo pyrimidine nucleotide biosynthesis pathway. The sequence is that of Aspartate carbamoyltransferase catalytic subunit from Aliivibrio fischeri (strain ATCC 700601 / ES114) (Vibrio fischeri).